The primary structure comprises 367 residues: Pectate lyase 1 (367 aa).

A signal peptide spans 1–21 (MASPCLIAVLVFLCAIVSCYS). Cysteine 28 and cysteine 45 are disulfide-bonded. The segment at 38–305 (NRMKLADCAV…YKKEVTKRIG (268 aa)) is beta-helix. The igE-binding. Binds to IgE in 5 out of 7 patients tested stretch occupies residues 92 to 104 (IFSQNMNIKLKMP). A disulfide bridge connects residues cysteine 128 and cysteine 147. The N-linked (GlcNAc...) asparagine glycan is linked to asparagine 148. Aspartate 170 contributes to the Ca(2+) binding site. A glycan (N-linked (GlcNAc...) asparagine) is linked at asparagine 178. Aspartate 194 and aspartate 198 together coordinate Ca(2+). Residues 239–250 (AFNQFGPNAGQR) are igE-binding. Binds to IgE in 6 out of 7 patients tested. Arginine 250 is an active-site residue. The interval 251 to 258 (MPRARYGL) is igE-binding. Binds to IgE in 5 out of 7 patients tested. A disulfide bridge connects residues cysteine 306 and cysteine 312. The segment at 317–327 (WRSTRDAFING) is igE-binding. Binds to IgE in 3 out of 7 patients tested.

Belongs to the polysaccharide lyase 1 family. Amb a subfamily. Ca(2+) serves as cofactor. In terms of processing, N-glycosylated; consists of complex-type N-glycans containing the Lewis a antigen (Galbeta1-3(Fucalpha1-4)GlcNAcbeta1-). As to expression, expressed in pollen (at protein level).

The enzyme catalyses Eliminative cleavage of (1-&gt;4)-alpha-D-galacturonan to give oligosaccharides with 4-deoxy-alpha-D-galact-4-enuronosyl groups at their non-reducing ends.. It functions in the pathway glycan metabolism; pectin degradation; 2-dehydro-3-deoxy-D-gluconate from pectin: step 2/5. Has low pectate lyase activity. This chain is Pectate lyase 1, found in Juniperus ashei (Ozark white cedar).